Consider the following 37-residue polypeptide: Large ribosomal subunit protein bL36 (37 aa).

It belongs to the bacterial ribosomal protein bL36 family.

The chain is Large ribosomal subunit protein bL36 from Photobacterium profundum (strain SS9).